The sequence spans 153 residues: Endoribonuclease YbeY (153 aa).

Zn(2+)-binding residues include His114, His118, and His124.

This sequence belongs to the endoribonuclease YbeY family. The cofactor is Zn(2+).

It is found in the cytoplasm. Functionally, single strand-specific metallo-endoribonuclease involved in late-stage 70S ribosome quality control and in maturation of the 3' terminus of the 16S rRNA. The sequence is that of Endoribonuclease YbeY from Shewanella putrefaciens (strain CN-32 / ATCC BAA-453).